Here is a 160-residue protein sequence, read N- to C-terminus: Ubiquitin-like protein ATG12 (160 aa).

The disordered stretch occupies residues 1-40; sequence MSETPKDQGPSSPSPSPSPSAASPMPLADNEVAGSGASSP. Glycine 160 is covalently cross-linked (Glycyl lysine isopeptide (Gly-Lys) (interchain with K-102 in ATG5)).

It belongs to the ATG12 family. In terms of assembly, forms a conjugate with ATG5. Forms a thioester bond with the 'Cys-196' of ATG10. Interacts with the ATG7 C-terminal 40 amino acids domain. The ATG12-ATG5 conjugate forms a complex with several units of ATG16. The ATG12-ATG5 conjugate also associates with ATG3.

The protein localises to the preautophagosomal structure membrane. Functionally, ubiquitin-like protein involved in cytoplasm to vacuole transport (Cvt), autophagy vesicles formation, mitophagy, and nucleophagy. Conjugation with ATG5 through a ubiquitin-like conjugating system involving also ATG7 as an E1-like activating enzyme and ATG10 as an E2-like conjugating enzyme, is essential for its function. The ATG12-ATG5 conjugate acts as an E3-like enzyme which is required for lipidation of ATG8 and ATG8 association to the vesicle membranes. ATG12-ATG5 rearranges the ATG3 catalytic center and enhances its E2 activity. Autophagy is required for proper vegetative growth, asexual/sexual reproduction, and full virulence. Autophagy is particularly involved in the biosynthesis of deoxynivalenol (DON), an important virulence determinant. The chain is Ubiquitin-like protein ATG12 from Gibberella zeae (strain ATCC MYA-4620 / CBS 123657 / FGSC 9075 / NRRL 31084 / PH-1) (Wheat head blight fungus).